The sequence spans 367 residues: Putative C-&gt;U-editing enzyme APOBEC-4 (367 aa).

A CMP/dCMP-type deaminase domain is found at 61–177 (PQTKHLTFYE…AWNREALRSL (117 aa)). His93 serves as a coordination point for Zn(2+). Glu95 (proton donor) is an active-site residue. Positions 127 and 134 each coordinate Zn(2+).

This sequence belongs to the cytidine and deoxycytidylate deaminase family. The cofactor is Zn(2+). Predominantly expressed in testis.

Functionally, putative C to U editing enzyme whose physiological substrate is not yet known. The sequence is that of Putative C-&gt;U-editing enzyme APOBEC-4 (APOBEC4) from Homo sapiens (Human).